The sequence spans 206 residues: Imidazoleglycerol-phosphate dehydratase (206 aa).

Positions 1-21 (MTALDSSRLLQPRTASVHRRT) are disordered.

Belongs to the imidazoleglycerol-phosphate dehydratase family.

It localises to the cytoplasm. It catalyses the reaction D-erythro-1-(imidazol-4-yl)glycerol 3-phosphate = 3-(imidazol-4-yl)-2-oxopropyl phosphate + H2O. It participates in amino-acid biosynthesis; L-histidine biosynthesis; L-histidine from 5-phospho-alpha-D-ribose 1-diphosphate: step 6/9. In Synechococcus sp. (strain JA-2-3B'a(2-13)) (Cyanobacteria bacterium Yellowstone B-Prime), this protein is Imidazoleglycerol-phosphate dehydratase.